The sequence spans 155 residues: RNA pyrophosphohydrolase (155 aa).

Positions 5–147 (KYRPNVAAII…KRQVYRQVIA (143 aa)) constitute a Nudix hydrolase domain. A Nudix box motif is present at residues 42–63 (GGIDEGETPLEALHRELLEEIG).

It belongs to the Nudix hydrolase family. RppH subfamily. The cofactor is a divalent metal cation.

Functionally, accelerates the degradation of transcripts by removing pyrophosphate from the 5'-end of triphosphorylated RNA, leading to a more labile monophosphorylated state that can stimulate subsequent ribonuclease cleavage. The protein is RNA pyrophosphohydrolase of Helicobacter pylori (strain HPAG1).